The following is a 459-amino-acid chain: Ribulose bisphosphate carboxylase large chain (459 aa).

Lys4 carries the N6,N6,N6-trimethyllysine modification. Substrate is bound by residues Asn113 and Thr163. The active-site Proton acceptor is the Lys165. Lys167 provides a ligand contact to substrate. Mg(2+) is bound by residues Lys191, Asp193, and Glu194. Lys191 bears the N6-carboxylysine mark. His284 functions as the Proton acceptor in the catalytic mechanism. Substrate contacts are provided by Arg285, His317, and Ser369.

This sequence belongs to the RuBisCO large chain family. Type I subfamily. In terms of assembly, heterohexadecamer of 8 large chains and 8 small chains; disulfide-linked. The disulfide link is formed within the large subunit homodimers. The cofactor is Mg(2+). The disulfide bond which can form in the large chain dimeric partners within the hexadecamer appears to be associated with oxidative stress and protein turnover.

It is found in the plastid. The protein localises to the chloroplast. It catalyses the reaction 2 (2R)-3-phosphoglycerate + 2 H(+) = D-ribulose 1,5-bisphosphate + CO2 + H2O. The catalysed reaction is D-ribulose 1,5-bisphosphate + O2 = 2-phosphoglycolate + (2R)-3-phosphoglycerate + 2 H(+). In terms of biological role, ruBisCO catalyzes two reactions: the carboxylation of D-ribulose 1,5-bisphosphate, the primary event in carbon dioxide fixation, as well as the oxidative fragmentation of the pentose substrate in the photorespiration process. Both reactions occur simultaneously and in competition at the same active site. The protein is Ribulose bisphosphate carboxylase large chain of Micranthes integrifolia (Wholeleaf saxifrage).